We begin with the raw amino-acid sequence, 286 residues long: uncharacterized protein (286 aa).

Residues 4–18 (AVIG…IARN) and Thr-95 contribute to the NAD(+) site. Lys-171 is an active-site residue. Residue Lys-239 coordinates NAD(+).

It belongs to the HIBADH-related family.

This is an uncharacterized protein from Bacillus subtilis (strain 168).